A 310-amino-acid polypeptide reads, in one-letter code: Olfactory receptor 5P1 (310 aa).

The Extracellular segment spans residues 1–25 (MEPGNHTAVTKFILLGLTDDPTLCV). The N-linked (GlcNAc...) asparagine glycan is linked to Asn5. Residues 26–46 (IFFVFFLGIYIVTLVGNISII) form a helical membrane-spanning segment. Residues 47-54 (NLVRSCPQ) are Cytoplasmic-facing. The helical transmembrane segment at 55 to 75 (LQTPMYMFLSHLAFVDIGYST) threads the bilayer. The Extracellular segment spans residues 76–99 (SVTPIMLIGFIVHETGLPVHACEA). A disulfide bond links Cys97 and Cys189. Residues 100–120 (QLCSVVTFGTAECFLLAAMAY) form a helical membrane-spanning segment. The Cytoplasmic segment spans residues 121–133 (DRYVAICSPLLYS). The helical transmembrane segment at 134 to 154 (THMSSQICLLLVGASYVGGCV) threads the bilayer. At 155–196 (NAWTFTGCLLSLSFCGPNKIDHFFCDFSPLLKLSCSDVSIIG) the chain is on the extracellular side. The chain crosses the membrane as a helical span at residues 197–217 (IIPSISAGSIIVVTVFVISVS). The Cytoplasmic segment spans residues 218 to 237 (YIYILITILKMRSTEGRHKA). The chain crosses the membrane as a helical span at residues 238–258 (FSTCTSHLTAVTLYYGTITFI). The Extracellular segment spans residues 259–271 (YVMPKSSYSTKQN). The chain crosses the membrane as a helical span at residues 272–292 (RVVSLFYTVVIPMLNPLIYSL). Over 293-310 (RNRDVKEALRKATLRIYS) the chain is Cytoplasmic.

Belongs to the G-protein coupled receptor 1 family.

It is found in the cell membrane. Its function is as follows. Potential odorant receptor. This Mus musculus (Mouse) protein is Olfactory receptor 5P1.